The primary structure comprises 182 residues: Adenine phosphoribosyltransferase (182 aa).

This sequence belongs to the purine/pyrimidine phosphoribosyltransferase family. Homodimer.

The protein resides in the cytoplasm. The enzyme catalyses AMP + diphosphate = 5-phospho-alpha-D-ribose 1-diphosphate + adenine. It participates in purine metabolism; AMP biosynthesis via salvage pathway; AMP from adenine: step 1/1. Catalyzes a salvage reaction resulting in the formation of AMP, that is energically less costly than de novo synthesis. This chain is Adenine phosphoribosyltransferase, found in Pseudomonas entomophila (strain L48).